The sequence spans 477 residues: Glycogen synthase (477 aa).

An ADP-alpha-D-glucose-binding site is contributed by lysine 15.

The protein belongs to the glycosyltransferase 1 family. Bacterial/plant glycogen synthase subfamily.

The catalysed reaction is [(1-&gt;4)-alpha-D-glucosyl](n) + ADP-alpha-D-glucose = [(1-&gt;4)-alpha-D-glucosyl](n+1) + ADP + H(+). The protein operates within glycan biosynthesis; glycogen biosynthesis. Synthesizes alpha-1,4-glucan chains using ADP-glucose. The chain is Glycogen synthase from Salmonella choleraesuis (strain SC-B67).